The primary structure comprises 220 residues: Ripening-related protein grip22 (220 aa).

The first 27 residues, 1–27 (MAKSALVWLASVCLVFNILSLPFLALG), serve as a signal peptide directing secretion.

This sequence belongs to the kiwellin family. Expressed in ripening fruits.

It is found in the secreted. This chain is Ripening-related protein grip22 (grip22), found in Vitis vinifera (Grape).